Reading from the N-terminus, the 388-residue chain is Chalcone synthase LF3 (388 aa).

Cysteine 164 is an active-site residue.

This sequence belongs to the thiolase-like superfamily. Chalcone/stilbene synthases family.

The enzyme catalyses (E)-4-coumaroyl-CoA + 3 malonyl-CoA + 3 H(+) = 2',4,4',6'-tetrahydroxychalcone + 3 CO2 + 4 CoA. It functions in the pathway secondary metabolite biosynthesis; flavonoid biosynthesis. The primary product of this enzyme is 4,2',4',6'-tetrahydroxychalcone (also termed naringenin-chalcone or chalcone) which can under specific conditions spontaneously isomerize into naringenin. The sequence is that of Chalcone synthase LF3 (CHS-LF3) from Ipomoea batatas (Sweet potato).